The following is a 351-amino-acid chain: Histidinol-phosphate aminotransferase (351 aa).

Lysine 221 carries the post-translational modification N6-(pyridoxal phosphate)lysine.

It belongs to the class-II pyridoxal-phosphate-dependent aminotransferase family. Histidinol-phosphate aminotransferase subfamily. Homodimer. It depends on pyridoxal 5'-phosphate as a cofactor.

It catalyses the reaction L-histidinol phosphate + 2-oxoglutarate = 3-(imidazol-4-yl)-2-oxopropyl phosphate + L-glutamate. Its pathway is amino-acid biosynthesis; L-histidine biosynthesis; L-histidine from 5-phospho-alpha-D-ribose 1-diphosphate: step 7/9. The protein is Histidinol-phosphate aminotransferase of Staphylococcus epidermidis (strain ATCC 35984 / DSM 28319 / BCRC 17069 / CCUG 31568 / BM 3577 / RP62A).